Reading from the N-terminus, the 930-residue chain is Isoleucine--tRNA ligase (930 aa).

The 'HIGH' region signature appears at 57-67 (PYANGNIHVGH). Glu554 contacts L-isoleucyl-5'-AMP. Positions 595-599 (KMSKS) match the 'KMSKS' region motif. Lys598 lines the ATP pocket.

Belongs to the class-I aminoacyl-tRNA synthetase family. IleS type 1 subfamily. Monomer.

It localises to the cytoplasm. The enzyme catalyses tRNA(Ile) + L-isoleucine + ATP = L-isoleucyl-tRNA(Ile) + AMP + diphosphate. Its function is as follows. Catalyzes the attachment of isoleucine to tRNA(Ile). As IleRS can inadvertently accommodate and process structurally similar amino acids such as valine, to avoid such errors it has two additional distinct tRNA(Ile)-dependent editing activities. One activity is designated as 'pretransfer' editing and involves the hydrolysis of activated Val-AMP. The other activity is designated 'posttransfer' editing and involves deacylation of mischarged Val-tRNA(Ile). In Streptococcus agalactiae serotype III (strain NEM316), this protein is Isoleucine--tRNA ligase.